A 132-amino-acid polypeptide reads, in one-letter code: Seminal vesicle protein SVP-2 (132 aa).

Positions 1-14 (HLALLLILENQASG) are cleaved as a signal peptide. Over residues 33 to 81 (HKEEVEESESSRGQDFDKRRFWEKDDPTGEHVSVRHEHLEKSHIRFKED) the composition is skewed to basic and acidic residues. Disordered stretches follow at residues 33 to 104 (HKEE…LKRH) and 113 to 132 (VEDQ…MQRV). Positions 104–132 (HDAMEELVSVEDQALANGADPGKSNMQRV) are excised as a propeptide.

To the SVP-1/-3/-4 precursor, particularly in regions where protein processing must occur.

It is found in the secreted. This Cavia porcellus (Guinea pig) protein is Seminal vesicle protein SVP-2.